A 269-amino-acid chain; its full sequence is Dermonecrotic toxin SpeSicTox-betaIB3 (269 aa).

H5 is a catalytic residue. E25 and D27 together coordinate Mg(2+). H41 acts as the Nucleophile in catalysis. Intrachain disulfides connect C45–C51 and C47–C191. Residue D85 coordinates Mg(2+).

The protein belongs to the arthropod phospholipase D family. Class II subfamily. Requires Mg(2+) as cofactor. Expressed by the venom gland.

It localises to the secreted. The enzyme catalyses an N-(acyl)-sphingosylphosphocholine = an N-(acyl)-sphingosyl-1,3-cyclic phosphate + choline. It catalyses the reaction an N-(acyl)-sphingosylphosphoethanolamine = an N-(acyl)-sphingosyl-1,3-cyclic phosphate + ethanolamine. It carries out the reaction a 1-acyl-sn-glycero-3-phosphocholine = a 1-acyl-sn-glycero-2,3-cyclic phosphate + choline. The catalysed reaction is a 1-acyl-sn-glycero-3-phosphoethanolamine = a 1-acyl-sn-glycero-2,3-cyclic phosphate + ethanolamine. In terms of biological role, dermonecrotic toxins cleave the phosphodiester linkage between the phosphate and headgroup of certain phospholipids (sphingolipid and lysolipid substrates), forming an alcohol (often choline) and a cyclic phosphate. This toxin acts on sphingomyelin (SM). It may also act on ceramide phosphoethanolamine (CPE), lysophosphatidylcholine (LPC) and lysophosphatidylethanolamine (LPE), but not on lysophosphatidylserine (LPS), and lysophosphatidylglycerol (LPG). It acts by transphosphatidylation, releasing exclusively cyclic phosphate products as second products. Induces dermonecrosis, hemolysis, increased vascular permeability, edema, inflammatory response, and platelet aggregation. This chain is Dermonecrotic toxin SpeSicTox-betaIB3, found in Sicarius peruensis (Six-eyed sand spider).